We begin with the raw amino-acid sequence, 303 residues long: Cyclin-dependent kinase 4 (303 aa).

Alanine 2 bears the N-acetylalanine mark. The Protein kinase domain maps to 6–295; sequence YEPVAEIGVG…AFRALQHSYL (290 aa). ATP contacts are provided by residues 12 to 20 and lysine 35; that span reads IGVGAYGTV. Residues 50–56 form a required for binding D-type cyclins region; that stretch reads PVSTVRE. Aspartate 140 serves as the catalytic Proton acceptor. Threonine 172 bears the Phosphothreonine; by CAK mark. Residue serine 300 is modified to Phosphoserine.

The protein belongs to the protein kinase superfamily. CMGC Ser/Thr protein kinase family. CDC2/CDKX subfamily. As to quaternary structure, component of the D-CDK4 complex, composed of CDK4 and some D-type G1 cyclin (CCND1, CCND2 or CCND3). Interacts directly in the complex with CCND1, CCND2 or CCND3. Interacts with SEI1 and ZNF655. Forms a ternary complex, cyclin D-CDK4-CDKN1B, involved in modulating CDK4 enzymatic activity. Interacts directly with CDKN1B (phosphorylated on 'Tyr-88' and 'Tyr-89'); the interaction allows assembly of the cyclin D-CDK4 complex, Thr-172 phosphorylation, nuclear translocation and enhances the cyclin D-CDK4 complex activity. CDK4 activity is either inhibited or enhanced depending on stoichiometry of complex. The non-tyrosine-phosphorylated form of CDKN1B prevents T-loop phosphorylation of CDK4 producing inactive CDK4. Interacts (unphosphorylated form) with CDK2. Also forms ternary complexes with CDKN1A or CDKN2A. Interacts directly with CDKN1A (via its N-terminal); the interaction promotes the assembly of the cyclin D-CDK4 complex, its nuclear translocation and promotes the cyclin D-dependent enzyme activity of CDK4. Interacts with CCND1; the interaction is prevented with the binding of CCND1 to INSM1 during cell cycle progression. Probably forms a complex composed of chaperones HSP90 and HSP70, co-chaperones CDC37, PPP5C, TSC1 and client protein TSC2, CDK4, AKT, RAF1 and NR3C1; this complex does not contain co-chaperones STIP1/HOP and PTGES3/p23. Interacts with CEBPA (when phosphorylated). Interacts with FNIP1 and FNIP2. Expressed in fetal and adult lung. Also expressed in brain, heart, liver, skeletal muscle and testes.

The protein resides in the cytoplasm. It localises to the nucleus. It is found in the nucleus membrane. It carries out the reaction L-seryl-[protein] + ATP = O-phospho-L-seryl-[protein] + ADP + H(+). It catalyses the reaction L-threonyl-[protein] + ATP = O-phospho-L-threonyl-[protein] + ADP + H(+). With respect to regulation, both phosphorylation at Thr-172 and binding of a D-type cyclin are necessary for enzymatic activity. Full activation of the cyclin-D-CDK4 complex appears to require other factors such as recruitment of the substrate via a substrate recruitment motif, and/or formation of the CDKN1B ternary complex. Inhibited by INK4 family members. In resting cells, the non-tyrosine-phosphorylated form of CDKN1B prevents phosphorylation at Thr-172 and inactivation, while, in proliferating cells, tyrosine phosphorylation of CDKN1B allows phosphorylation of Thr-172 of CDK4 and subsequent activation. In terms of biological role, ser/Thr-kinase component of cyclin D-CDK4 (DC) complexes that phosphorylate and inhibit members of the retinoblastoma (RB) protein family including RB1 and regulate the cell-cycle during G(1)/S transition. Phosphorylation of RB1 allows dissociation of the transcription factor E2F from the RB/E2F complexes and the subsequent transcription of E2F target genes which are responsible for the progression through the G(1) phase. Hypophosphorylates RB1 in early G(1) phase. Cyclin D-CDK4 complexes are major integrators of various mitogenenic and antimitogenic signals. Also phosphorylates SMAD3 in a cell-cycle-dependent manner and represses its transcriptional activity. Component of the ternary complex, cyclin D/CDK4/CDKN1B, required for nuclear translocation and activity of the cyclin D-CDK4 complex. The chain is Cyclin-dependent kinase 4 (Cdk4) from Rattus norvegicus (Rat).